The following is a 270-amino-acid chain: Diaminopimelate epimerase (270 aa).

Substrate contacts are provided by Asn15, Gln49, and Asn66. Cys75 (proton donor) is an active-site residue. Residues 76 to 77 (GN), Asn155, Asn187, and 204 to 205 (ER) contribute to the substrate site. The Proton acceptor role is filled by Cys213. 214–215 (GS) is a binding site for substrate.

It belongs to the diaminopimelate epimerase family. Homodimer.

The protein resides in the cytoplasm. The enzyme catalyses (2S,6S)-2,6-diaminopimelate = meso-2,6-diaminopimelate. The protein operates within amino-acid biosynthesis; L-lysine biosynthesis via DAP pathway; DL-2,6-diaminopimelate from LL-2,6-diaminopimelate: step 1/1. Catalyzes the stereoinversion of LL-2,6-diaminopimelate (L,L-DAP) to meso-diaminopimelate (meso-DAP), a precursor of L-lysine and an essential component of the bacterial peptidoglycan. In Rickettsia akari (strain Hartford), this protein is Diaminopimelate epimerase.